We begin with the raw amino-acid sequence, 270 residues long: Transcriptional regulator BrlR (270 aa).

M1 is a binding site for 3',3'-c-di-GMP. One can recognise an HTH merR-type domain in the interval 1–71 (MLTIGQLARI…LEAIDRLKRD (71 aa)). The H-T-H motif DNA-binding region spans 4–23 (IGQLARIFEISTKTLRHYDA). R31, S34, D35, Y40, R67, R70, R86, and Y270 together coordinate 3',3'-c-di-GMP. Residues 120 to 270 (MHARIVERPA…SQVDLYIPIY (151 aa)) form an involved in effector-binding, probably including pyocyanine-binding region.

In terms of assembly, monomer. Homodimer; dimer formation enhanced in the presence of the second messenger, cyclic di-GMP (c-di-GMP). Homotetramer; dimer of dimers, arranged in a head-to-tail fashion, which may reduce DNA-binding ability. Conformational changes upon binding c-di-GMP or pyocyanine may facilitate DNA binding.

In terms of biological role, transcriptional regulator. Responsive to the second messenger cyclic di-GMP (c-di-GMP) and to the virulence factor pyocyanine, which both enhance gene expression and promoter DNA binding of BrlR. Activates expression of operons encoding the multidrug efflux pumps MexAB-OprM and MexEF-OprN and several ABC transport systems, acting by direct binding to their respective promoters. Also acts as a repressor of the two component regulatory system, PhoPQ. Binds to promoter of its own gene. Contributes to the antimicrobial tolerance exhibited by biofilms, acting, at least in part, by activating expression of multidrug efflux pumps and ABC transporters. The chain is Transcriptional regulator BrlR from Pseudomonas aeruginosa (strain ATCC 15692 / DSM 22644 / CIP 104116 / JCM 14847 / LMG 12228 / 1C / PRS 101 / PAO1).